The chain runs to 534 residues: Endoglucanase 5 (534 aa).

Positions 1–27 are cleaved as a signal peptide; the sequence is MSDVSGRFVVAAAVVAVSLAMAAAAAA. Catalysis depends on Asp82, which acts as the Nucleophile. Residues His432, Asp484, and Glu493 contribute to the active site. The disordered stretch occupies residues 515 to 534; that stretch reads RRRGEDAPPSSTSPVAEDDL.

It belongs to the glycosyl hydrolase 9 (cellulase E) family.

The protein resides in the secreted. The catalysed reaction is Endohydrolysis of (1-&gt;4)-beta-D-glucosidic linkages in cellulose, lichenin and cereal beta-D-glucans.. The protein is Endoglucanase 5 of Oryza sativa subsp. japonica (Rice).